Reading from the N-terminus, the 372-residue chain is Chaperone protein DnaJ (372 aa).

The J domain occupies 5–70 (DFYEVLGVTK…QKRAAYDRYG (66 aa)). Residues 129–207 (GKLASLTLPT…CGGAGRVTRE (79 aa)) form a CR-type zinc finger. Cysteine 142, cysteine 145, cysteine 159, cysteine 162, cysteine 181, cysteine 184, cysteine 195, and cysteine 198 together coordinate Zn(2+). CXXCXGXG motif repeat units follow at residues 142–149 (CEACDGTG), 159–166 (CPTCGGQG), 181–188 (CPQCHGRG), and 195–202 (CQACGGAG).

The protein belongs to the DnaJ family. Homodimer. Zn(2+) serves as cofactor.

The protein resides in the cytoplasm. Functionally, participates actively in the response to hyperosmotic and heat shock by preventing the aggregation of stress-denatured proteins and by disaggregating proteins, also in an autonomous, DnaK-independent fashion. Unfolded proteins bind initially to DnaJ; upon interaction with the DnaJ-bound protein, DnaK hydrolyzes its bound ATP, resulting in the formation of a stable complex. GrpE releases ADP from DnaK; ATP binding to DnaK triggers the release of the substrate protein, thus completing the reaction cycle. Several rounds of ATP-dependent interactions between DnaJ, DnaK and GrpE are required for fully efficient folding. Also involved, together with DnaK and GrpE, in the DNA replication of plasmids through activation of initiation proteins. The chain is Chaperone protein DnaJ from Beijerinckia indica subsp. indica (strain ATCC 9039 / DSM 1715 / NCIMB 8712).